The sequence spans 292 residues: RNA-binding P34 protein (292 aa).

Residues 29–46 (CAIYTVACRILFLSVGFM) traverse the membrane as a helical segment. Residues 219 to 292 (EGFKSPQVEY…NFKAKNKNNE (74 aa)) are RNA-binding.

Its subcellular location is the host endoplasmic reticulum membrane. In terms of biological role, acts as a ssRNA-binding protein that may be involved in targeting RNA2 to replication sites or facilitating RNA2 replication. The polypeptide is RNA-binding P34 protein (Lettuce infectious yellows virus (isolate United States/92) (LIYV)).